Here is a 746-residue protein sequence, read N- to C-terminus: Protein C-mannosyl-transferase DPY19L1 (746 aa).

A disordered region spans residues 1–68 (MVLQARSKHR…RAGTAAPAPD (68 aa)). Phosphoserine occurs at positions 28 and 31. Residues 59 to 68 (RAGTAAPAPD) are compositionally biased toward low complexity. A run of 11 helical transmembrane segments spans residues 137-159 (LYYS…WMIM), 227-247 (ACFY…LFFI), 257-279 (LGGV…VMWT), 307-325 (LCRG…FMLP), 331-350 (FVLL…GYID), 357-374 (IIYM…LMFG), 380-396 (TSYY…MLAM), 405-425 (VSEL…TVIL), 481-501 (LLLP…FNDM), 520-540 (GELV…VLIM), and 562-582 (LFGW…ILAA).

This sequence belongs to the dpy-19 family.

It is found in the endoplasmic reticulum membrane. It catalyses the reaction L-tryptophyl-[protein] + a di-trans,poly-cis-dolichyl beta-D-mannosyl phosphate = C-alpha-D-mannosyl-L-tryptophyl-[protein] + a di-trans,poly-cis-dolichyl phosphate + H(+). Its pathway is protein modification; protein glycosylation. In terms of biological role, C-mannosyltransferase that mediates the C-mannosylation tryptophan residues on target proteins. The reaction occurs on the luminal side of the endoplasmic reticulum and involves the transfer of a mannose unit from a dolichylphosphate mannose (Dol-P-Man) donor to an acceptor protein containing a WxxW consensus sequence. C-mannosylates the first two tryptophans in the WxxWxxWxxC sequence motif in thrombospondin (TSP) type-1 repeats of UNC5A. Regulates neurite extension during development. The chain is Protein C-mannosyl-transferase DPY19L1 (Dpy19l1) from Mus musculus (Mouse).